A 450-amino-acid chain; its full sequence is Probable 1,4-beta-D-glucan cellobiohydrolase C (450 aa).

The signal sequence occupies residues 1-19 (MKHLASSIALTLLLPAVQA). The CBM1 domain maps to 20–55 (QQTVWGQCGGQGWSGPTNCVAGAACSTLNPYYAQCI). 2 disulfides stabilise this stretch: Cys27-Cys44 and Cys38-Cys54. Residues 59–90 (TATSTTLSTTTTTQTTTKPTTTGPTTSAPTVT) form a thr-rich linker region. A disordered region spans residues 63 to 89 (TTLSTTTTTQTTTKPTTTGPTTSAPTV). The interval 91 to 450 (ASGNPFSGYQ…QLLTNANPSF (360 aa)) is catalytic. Asp180 is a catalytic residue. 2 disulfide bridges follow: Cys181/Cys240 and Cys372/Cys419. The Proton donor role is filled by Asp226. The active-site Nucleophile is Asp405. The N-linked (GlcNAc...) asparagine glycan is linked to Asn409.

It belongs to the glycosyl hydrolase 6 (cellulase B) family.

The protein resides in the secreted. The catalysed reaction is Hydrolysis of (1-&gt;4)-beta-D-glucosidic linkages in cellulose and cellotetraose, releasing cellobiose from the non-reducing ends of the chains.. In terms of biological role, the biological conversion of cellulose to glucose generally requires three types of hydrolytic enzymes: (1) Endoglucanases which cut internal beta-1,4-glucosidic bonds; (2) Exocellobiohydrolases that cut the disaccharide cellobiose from the non-reducing end of the cellulose polymer chain; (3) Beta-1,4-glucosidases which hydrolyze the cellobiose and other short cello-oligosaccharides to glucose. In Neosartorya fischeri (strain ATCC 1020 / DSM 3700 / CBS 544.65 / FGSC A1164 / JCM 1740 / NRRL 181 / WB 181) (Aspergillus fischerianus), this protein is Probable 1,4-beta-D-glucan cellobiohydrolase C (cbhC).